A 551-amino-acid polypeptide reads, in one-letter code: Glucose-6-phosphate isomerase (551 aa).

D-glucose 6-phosphate-binding positions include 161 to 162 (GS), 212 to 217 (SKTFTT), Q356, E360, H391, and K516. E360 acts as the Proton donor in catalysis. Active-site residues include H391 and K516.

Belongs to the GPI family. In terms of assembly, homodimer.

It is found in the cytoplasm. The protein localises to the cytosol. The enzyme catalyses alpha-D-glucose 6-phosphate = beta-D-fructose 6-phosphate. Its pathway is carbohydrate degradation; glycolysis; D-glyceraldehyde 3-phosphate and glycerone phosphate from D-glucose: step 2/4. In the cytoplasm, catalyzes the conversion of glucose-6-phosphate to fructose-6-phosphate, the second step in glycolysis, and the reverse reaction during gluconeogenesis. The protein is Glucose-6-phosphate isomerase (gpi1) of Agaricus bisporus (White button mushroom).